The following is a 99-amino-acid chain: MFAIIETGGKQILVKKDDFIFIEKIEGEAGQNVVFDKVLLVDDKIGTPFLKNATVTGIIEKQGKQKKIVVYRHNAKSTHKRKLGHRQPYTRVKILEIKG.

The protein belongs to the bacterial ribosomal protein bL21 family. In terms of assembly, part of the 50S ribosomal subunit. Contacts protein L20.

Functionally, this protein binds to 23S rRNA in the presence of protein L20. In Mycoplasma mobile (strain ATCC 43663 / 163K / NCTC 11711) (Mesomycoplasma mobile), this protein is Large ribosomal subunit protein bL21.